A 604-amino-acid polypeptide reads, in one-letter code: Prostaglandin G/H synthase 2 (604 aa).

The first 17 residues, Met1–Ala17, serve as a signal peptide directing secretion. The EGF-like domain maps to Ala18–Thr55. 4 disulfide bridges follow: Cys21/Cys32, Cys22/Cys145, Cys26/Cys42, and Cys44/Cys54. Asn53 carries an N-linked (GlcNAc...) asparagine glycan. Arg106 contacts substrate. Asn130 carries N-linked (GlcNAc...) asparagine glycosylation. His193 serves as the catalytic Proton acceptor. Residue Tyr341 participates in substrate binding. The active-site For cyclooxygenase activity is the Tyr371. Residue His374 participates in heme b binding. N-linked (GlcNAc...) asparagine glycosylation occurs at Asn396. Residue Cys526 is modified to S-nitrosocysteine. Cys555 and Cys561 are oxidised to a cystine. The N-linked (GlcNAc...) asparagine glycan is linked to Asn580.

This sequence belongs to the prostaglandin G/H synthase family. Homodimer. Requires heme b as cofactor. In terms of processing, S-nitrosylation by NOS2 (iNOS) activates enzyme activity. S-nitrosylation may take place on different Cys residues in addition to Cys-526.

It localises to the microsome membrane. The protein localises to the endoplasmic reticulum membrane. Its subcellular location is the nucleus inner membrane. The protein resides in the nucleus outer membrane. The catalysed reaction is (5Z,8Z,11Z,14Z)-eicosatetraenoate + AH2 + 2 O2 = prostaglandin H2 + A + H2O. It carries out the reaction (5Z,8Z,11Z,14Z)-eicosatetraenoate + 2 O2 = prostaglandin G2. The enzyme catalyses prostaglandin G2 + AH2 = prostaglandin H2 + A + H2O. It catalyses the reaction (5Z,8Z,11Z,14Z,17Z)-eicosapentaenoate + 2 O2 = prostaglandin G3. The catalysed reaction is prostaglandin G3 + AH2 = prostaglandin H3 + A + H2O. It carries out the reaction (8Z,11Z,14Z)-eicosatrienoate + 2 O2 = prostaglandin G1. The enzyme catalyses prostaglandin G1 + AH2 = prostaglandin H1 + A + H2O. It catalyses the reaction 2-(5Z,8Z,11Z,14Z)-eicosatetraenoyl-sn-glycero-3-phosphoethanolamine + 2 O2 = 2-(prostaglandin G2)-sn-glycero-3-phosphoethanolamine. The catalysed reaction is 2-(prostaglandin G2)-sn-glycero-3-phosphoethanolamine + AH2 = 2-(prostaglandin H2)-sn-glycero-3-phosphoethanolamine + A + H2O. It carries out the reaction 2-(5Z,8Z,11Z,14Z)-eicosatetraenoyl-sn-glycero-3-phosphocholine + 2 O2 = 2-(prostaglandin G2)-sn-glycero-3-phosphocholine. The enzyme catalyses 2-(prostaglandin G2)-sn-glycero-3-phosphocholine + AH2 = 2-(prostaglandin H2)-sn-glycero-3-phosphocholine + A + H2O. It catalyses the reaction (15S)-hydroperoxy-(5Z,8Z,11Z,13E)-eicosatetraenoate + AH2 = (15S)-hydroxy-(5Z,8Z,11Z,13E)-eicosatetraenoate + A + H2O. The catalysed reaction is 2-(5Z,8Z,11Z,14Z)-eicosatetraenoyl-sn-glycero-3-phosphocholine + AH2 + O2 = 2-[(15S)-hydroxy-(5Z,8Z,11Z,13E)-eicosatetraenoyl]-sn-glycero-3-phosphocholine + A + H2O. It carries out the reaction 2-(5Z,8Z,11Z,14Z)-eicosatetraenoyl-sn-glycero-3-phosphocholine + AH2 + O2 = 2-[(15R)-hydroxy-(5Z,8Z,11Z,13E)-eicosatetraenoyl]-sn-glycero-3-phosphocholine + A + H2O. The enzyme catalyses 2-(5Z,8Z,11Z,14Z)-eicosatetraenoyl-sn-glycero-3-phosphocholine + AH2 + O2 = 2-[(11R)-hydroxy-(5Z,8Z,12E,14Z)-eicosatetraenoyl]-sn-glycero-3-phosphocholine + A + H2O. It catalyses the reaction (9Z,12Z)-octadecadienoate + AH2 + O2 = 9-hydroxy-(10E,12Z)-octadecadienoate + A + H2O. The catalysed reaction is (9Z,12Z)-octadecadienoate + AH2 + O2 = 13-hydroxy-(9Z,11E)-octadecadienoate + A + H2O. It carries out the reaction (5Z,8Z,11Z,14Z)-eicosatetraenoate + AH2 + O2 = (15R)-hydroxy-(5Z,8Z,11Z,13E)-eicosatetraenoate + A + H2O. The enzyme catalyses (5Z,8Z,11Z,14Z)-eicosatetraenoate + AH2 + O2 = (11R)-hydroxy-(5Z,8Z,12E,14Z)-eicosatetraenoate + A + H2O. It catalyses the reaction (5Z,8Z,11Z,14Z,17Z)-eicosapentaenoate + AH2 + O2 = (11R)-hydroxy-(5Z,8Z,12E,14Z,17Z)-eicosapentaenoate + A + H2O. The catalysed reaction is (5Z,8Z,11Z,14Z,17Z)-eicosapentaenoate + AH2 + O2 = (18S)-hydroxy-(5Z,8Z,11Z,14Z,16E)-eicosapentaenoate + A + H2O. It carries out the reaction (5Z,8Z,11Z,14Z,17Z)-eicosapentaenoate + AH2 + O2 = (18R)-hydroxy-(5Z,8Z,11Z,14Z,16E)-eicosapentaenoate + A + H2O. The enzyme catalyses (5Z,8Z,11Z,14Z,17Z)-eicosapentaenoate + AH2 + O2 = (15R)-hydroxy-(5Z,8Z,11Z,13E,17Z)-eicosapentaenoate + A + H2O. It catalyses the reaction (5Z,8Z,11Z,14Z,17Z)-eicosapentaenoate + AH2 + O2 = (15S)-hydroxy-(5Z,8Z,11Z,13E,17Z)-eicosapentaenoate + A + H2O. The catalysed reaction is (7Z,10Z,13Z,16Z,19Z)-docosapentaenoate + AH2 + O2 = 13R-hydroxy-(7Z,10Z,14E,16Z,19Z)-docosapentaenoate + A + H2O. It carries out the reaction (4Z,7Z,10Z,13Z,16Z,19Z)-docosahexaenoate + AH2 + O2 = 13-hydroxy-(4Z,7Z,10Z,14E,16Z,19Z)-docosahexaenoate + A + H2O. The enzyme catalyses (5S)-hydroxy-(6E,8Z,11Z,14Z)-eicosatetraenoate + AH2 + O2 = (5S,15R)-dihydroxy-(6E,8Z,11Z,13E)-eicosatetraenoate + A + H2O. It catalyses the reaction (4Z,7Z,10Z,13Z,16Z,19Z)-docosahexaenoate + AH2 + O2 = 17R-hydroxy-(4Z,7Z,10Z,13Z,15E,19Z)-docosahexaenoate + A + H2O. The catalysed reaction is (5S)-hydroxy-(6E,8Z,11Z,14Z)-eicosatetraenoate + AH2 + O2 = (5S,15S)-dihydroxy-(6E,8Z,11Z,13E)-eicosatetraenoate + A + H2O. It carries out the reaction (5S)-hydroxy-(6E,8Z,11Z,14Z)-eicosatetraenoate + AH2 + O2 = (5S,11R)-dihydroxy-(6E,8Z,12E,14Z)-eicosatetraenoate + A + H2O. The enzyme catalyses 2-(5Z,8Z,11Z,14Z-eicosatetraenoyl)-glycerol + 2 O2 = 2-glyceryl-prostaglandin G2. It catalyses the reaction 2-glyceryl-prostaglandin G2 + AH2 = 2-glyceryl-prostaglandin H2 + A + H2O. The catalysed reaction is (5Z,8Z,11Z,14Z)-eicosatetraenoate + O2 = (15R)-hydroperoxy-(5Z,8Z,11Z,13E)-eicosatetraenoate. It carries out the reaction (5Z,8Z,11Z,14Z)-eicosatetraenoate + O2 = 11R-hydroperoxy-(5Z,8Z,12E,14Z)-eicosatetraenoate. The enzyme catalyses (9Z,12Z)-octadecadienoate + AH2 + O2 = (9R)-hydroxy-(10E,12Z)-octadecadienoate + A + H2O. It catalyses the reaction (9Z,12Z)-octadecadienoate + AH2 + O2 = (9S)-hydroxy-(10E,12Z)-octadecadienoate + A + H2O. The catalysed reaction is (9Z,12Z)-octadecadienoate + AH2 + O2 = (13S)-hydroxy-(9Z,11E)-octadecadienoate + A + H2O. It carries out the reaction (9Z,12Z)-octadecadienoate + AH2 + O2 = (13R)-hydroxy-(9Z,11E)-octadecadienoate + A + H2O. Its pathway is lipid metabolism; prostaglandin biosynthesis. Its function is as follows. Dual cyclooxygenase and peroxidase in the biosynthesis pathway of prostanoids, a class of C20 oxylipins mainly derived from arachidonate ((5Z,8Z,11Z,14Z)-eicosatetraenoate, AA, C20:4(n-6)), with a particular role in the inflammatory response. The cyclooxygenase activity oxygenates AA to the hydroperoxy endoperoxide prostaglandin G2 (PGG2), and the peroxidase activity reduces PGG2 to the hydroxy endoperoxide prostaglandin H2 (PGH2), the precursor of all 2-series prostaglandins and thromboxanes. This complex transformation is initiated by abstraction of hydrogen at carbon 13 (with S-stereochemistry), followed by insertion of molecular O2 to form the endoperoxide bridge between carbon 9 and 11 that defines prostaglandins. The insertion of a second molecule of O2 (bis-oxygenase activity) yields a hydroperoxy group in PGG2 that is then reduced to PGH2 by two electrons. Similarly catalyzes successive cyclooxygenation and peroxidation of dihomo-gamma-linoleate (DGLA, C20:3(n-6)) and eicosapentaenoate (EPA, C20:5(n-3)) to corresponding PGH1 and PGH3, the precursors of 1- and 3-series prostaglandins. In an alternative pathway of prostanoid biosynthesis, converts 2-arachidonoyl lysophopholipids to prostanoid lysophopholipids, which are then hydrolyzed by intracellular phospholipases to release free prostanoids. Metabolizes 2-arachidonoyl glycerol yielding the glyceryl ester of PGH2, a process that can contribute to pain response. Generates lipid mediators from n-3 and n-6 polyunsaturated fatty acids (PUFAs) via a lipoxygenase-type mechanism. Oxygenates PUFAs to hydroperoxy compounds and then reduces them to corresponding alcohols. Plays a role in the generation of resolution phase interaction products (resolvins) during both sterile and infectious inflammation. Metabolizes docosahexaenoate (DHA, C22:6(n-3)) to 17R-HDHA, a precursor of the D-series resolvins (RvDs). As a component of the biosynthetic pathway of E-series resolvins (RvEs), converts eicosapentaenoate (EPA, C20:5(n-3)) primarily to 18S-HEPE that is further metabolized by ALOX5 and LTA4H to generate 18S-RvE1 and 18S-RvE2. In vascular endothelial cells, converts docosapentaenoate (DPA, C22:5(n-3)) to 13R-HDPA, a precursor for 13-series resolvins (RvTs) shown to activate macrophage phagocytosis during bacterial infection. In activated leukocytes, contributes to oxygenation of hydroxyeicosatetraenoates (HETE) to diHETES (5,15-diHETE and 5,11-diHETE). Can also use linoleate (LA, (9Z,12Z)-octadecadienoate, C18:2(n-6)) as substrate and produce hydroxyoctadecadienoates (HODEs) in a regio- and stereospecific manner, being (9R)-HODE ((9R)-hydroxy-(10E,12Z)-octadecadienoate) and (13S)-HODE ((13S)-hydroxy-(9Z,11E)-octadecadienoate) its major products. During neuroinflammation, plays a role in neuronal secretion of specialized preresolving mediators (SPMs) 15R-lipoxin A4 that regulates phagocytic microglia. This is Prostaglandin G/H synthase 2 (PTGS2) from Cavia porcellus (Guinea pig).